The following is a 37-amino-acid chain: Large ribosomal subunit protein bL36 (37 aa).

Belongs to the bacterial ribosomal protein bL36 family.

The chain is Large ribosomal subunit protein bL36 (rpmJ) from Mycobacterium tuberculosis (strain ATCC 25618 / H37Rv).